We begin with the raw amino-acid sequence, 153 residues long: Cytochrome c-type biogenesis protein CcmE (153 aa).

At 1 to 7 (MKPRHKR) the chain is on the cytoplasmic side. A helical; Signal-anchor for type II membrane protein transmembrane segment spans residues 8 to 28 (LAIAGGVLVAVGAIATLVLNA). Over 29 to 153 (FQSNLVFFYS…SSQAATGDPR (125 aa)) the chain is Periplasmic. Heme contacts are provided by His120 and Tyr124. Residues 130–153 (AEALKRAKEGGQMQSSQAATGDPR) are disordered. Residues 141-153 (QMQSSQAATGDPR) show a composition bias toward polar residues.

The protein belongs to the CcmE/CycJ family.

It is found in the cell inner membrane. Functionally, heme chaperone required for the biogenesis of c-type cytochromes. Transiently binds heme delivered by CcmC and transfers the heme to apo-cytochromes in a process facilitated by CcmF and CcmH. The protein is Cytochrome c-type biogenesis protein CcmE of Leptothrix cholodnii (strain ATCC 51168 / LMG 8142 / SP-6) (Leptothrix discophora (strain SP-6)).